The chain runs to 772 residues: Semaphorin-3A (772 aa).

The first 20 residues, 1–20, serve as a signal peptide directing secretion; it reads MGWFTGIACLFWGVLLTARA. The 484-residue stretch at 31–514 folds into the Sema domain; sequence RLKLSYKEML…STAGVAQLPL (484 aa). Residue N53 is glycosylated (N-linked (GlcNAc...) asparagine). A disulfide bridge connects residues C103 and C114. A glycan (N-linked (GlcNAc...) asparagine) is linked at N125. Disulfide bonds link C132–C141, C269–C381, C293–C341, and C517–C535. One can recognise an Ig-like C2-type domain in the interval 579-665; that stretch reads PSLEERIIYG…GFMQTLLKVT (87 aa). A glycan (N-linked (GlcNAc...) asparagine) is linked at N591. The cysteines at positions 650 and 723 are disulfide-linked. A compositionally biased stretch (basic residues) spans 729-738; it reads RDRKQRRQRP. Residues 729–772 form a disordered region; that stretch reads RDRKQRRQRPGHSQGSSNKWKHMQESKKGRNRRTHEFERAPRSV. Basic and acidic residues predominate over residues 750 to 772; the sequence is HMQESKKGRNRRTHEFERAPRSV.

The protein belongs to the semaphorin family. As to quaternary structure, interacts with PXND1.

It is found in the secreted. Plays a role in growth cones guidance. May function to pattern sensory projections by selectively repelling axons that normally terminate dorsally. Involved in the development of the olfactory system and in neuronal control of puberty. In Mus musculus (Mouse), this protein is Semaphorin-3A (Sema3a).